The following is a 118-amino-acid chain: Large ribosomal subunit protein uL18 (118 aa).

Positions 1–24 (MISKPDKNKIRQKRHRRVRGKLSG) are disordered. A compositionally biased stretch (basic residues) spans 10-20 (IRQKRHRRVRG).

Belongs to the universal ribosomal protein uL18 family. Part of the 50S ribosomal subunit; part of the 5S rRNA/L5/L18/L25 subcomplex. Contacts the 5S and 23S rRNAs.

This is one of the proteins that bind and probably mediate the attachment of the 5S RNA into the large ribosomal subunit, where it forms part of the central protuberance. In Streptococcus mutans serotype c (strain ATCC 700610 / UA159), this protein is Large ribosomal subunit protein uL18.